The primary structure comprises 213 residues: uncharacterized protein (213 aa).

In terms of domain architecture, CS spans 2–91 (SRHPEVKWAQ…AEAKWWKKLV (90 aa)). The tract at residues 168–213 (GMGGMGGMDEFEDESDDEEEVSKPQDAEKAAEAGKSQESDAKAETS) is disordered. Residues 176 to 187 (DEFEDESDDEEE) are compositionally biased toward acidic residues. Basic and acidic residues predominate over residues 188–213 (VSKPQDAEKAAEAGKSQESDAKAETS).

The protein belongs to the p23/wos2 family.

This is an uncharacterized protein from Oryza sativa subsp. japonica (Rice).